We begin with the raw amino-acid sequence, 330 residues long: Pseudouridine-5'-phosphate glycosidase (330 aa).

The active-site Proton donor is Glu50. Positions 112 and 132 each coordinate substrate. Mn(2+) is bound at residue Asp164. 166–168 is a binding site for substrate; it reads SSD. The active-site Nucleophile is the Lys185.

It belongs to the pseudouridine-5'-phosphate glycosidase family. In terms of assembly, homotrimer. Requires Mn(2+) as cofactor.

The protein localises to the peroxisome. It catalyses the reaction D-ribose 5-phosphate + uracil = psi-UMP + H2O. Functionally, catalyzes the reversible cleavage of pseudouridine 5'-phosphate (PsiMP) to ribose 5-phosphate and uracil. Functions biologically in the cleavage direction, as part of a pseudouridine degradation pathway. Acts together with the pseudouridine kinase PUKI in the peroxisome to prevent toxic pseudouridine monophosphate accumulation. Can catalyze the formation of pseudouridine 5'-phosphate (reverse reaction) in vitro, with a catalytic efficiency 4 times lower than the hydrolysis reaction. The protein is Pseudouridine-5'-phosphate glycosidase of Arabidopsis thaliana (Mouse-ear cress).